Here is a 465-residue protein sequence, read N- to C-terminus: ATP-dependent RNA helicase ddx19 (465 aa).

A compositionally biased stretch (basic and acidic residues) spans 1 to 20 (MSEKETNTTSTENKEKEKQE). The interval 1–45 (MSEKETNTTSTENKEKEKQEQTNTNSTTESTNNQVDEEYERPGRS) is disordered. Low complexity predominate over residues 21 to 34 (QTNTNSTTESTNNQ). The Q motif motif lies at 70–98 (KTFEELGLKPELLKGVYAMGYNKPSKIQE). One can recognise a Helicase ATP-binding domain in the interval 102 to 268 (PIIIQSPNNL…KKIVQDPYTS (167 aa)). ATP is bound at residue 115 to 122 (SQSGTGKT). A DEAD box motif is present at residues 215–218 (DEAD). In terms of domain architecture, Helicase C-terminal spans 297-449 (ILSDIYGFIS…ELKSSEIESL (153 aa)).

This sequence belongs to the DEAD box helicase family. DDX19/DBP5 subfamily.

The enzyme catalyses ATP + H2O = ADP + phosphate + H(+). In terms of biological role, ATP-binding RNA helicase required for normal differentiation and development. In Dictyostelium discoideum (Social amoeba), this protein is ATP-dependent RNA helicase ddx19 (helC).